Consider the following 216-residue polypeptide: Pyrophosphatase PpaX (216 aa).

Asp-12 (nucleophile) is an active-site residue.

It belongs to the HAD-like hydrolase superfamily. PpaX family. Mg(2+) serves as cofactor.

It catalyses the reaction diphosphate + H2O = 2 phosphate + H(+). In terms of biological role, hydrolyzes pyrophosphate formed during P-Ser-HPr dephosphorylation by HPrK/P. Might play a role in controlling the intracellular pyrophosphate pool. The sequence is that of Pyrophosphatase PpaX from Bacillus pumilus (strain SAFR-032).